The chain runs to 214 residues: Calcineurin B-like protein 8 (214 aa).

4 consecutive EF-hand domains span residues 35–70 (EIEA…RNGS), 71–106 (MQNL…FHPY), 108–143 (PEHE…LLGE), and 152–187 (SIEA…NPSI). Ca(2+) is bound by residues D165, N167, D169, K171, and E176. Phosphoserine is present on S205.

It belongs to the calcineurin regulatory subunit family. Interacts with CIPK23. Interacts with CIPK14 at the cell membrane exclusively.

Its subcellular location is the cytoplasm. It localises to the nucleus. The protein localises to the cell membrane. Functionally, acts as a calcium sensor. CBL proteins interact with CIPK serine-threonine protein kinases. Binding of a CBL protein to the regulatory NAF domain of a CIPK protein lead to the activation of the kinase in a calcium-dependent manner. This is Calcineurin B-like protein 8 (CBL8) from Arabidopsis thaliana (Mouse-ear cress).